The following is a 550-amino-acid chain: Ribosomal protein S6 kinase beta (550 aa).

Positions 83 to 344 (FQLLKVLGKG…AEEIKSHAFF (262 aa)) constitute a Protein kinase domain. Residues 89-97 (LGKGGYGKV) and lysine 115 each bind ATP. Aspartate 210 functions as the Proton acceptor in the catalytic mechanism. An AGC-kinase C-terminal domain is found at 345 to 415 (KTTDWNLVYA…VAPSVLEMMN (71 aa)). Residue threonine 404 is modified to Phosphothreonine. Disordered regions lie at residues 433–466 (RAGA…GPNS) and 484–550 (TAGG…KRVM). At serine 439 the chain carries Phosphoserine. Residues 520–534 (TTTGNGSTTTTRPSN) show a composition bias toward low complexity.

This sequence belongs to the protein kinase superfamily. AGC Ser/Thr protein kinase family. S6 kinase subfamily. Requires Mg(2+) as cofactor. In terms of processing, may be phosphorylated on Thr-404 by let-363/TOR.

It localises to the cell projection. The protein localises to the axon. The protein resides in the perikaryon. It carries out the reaction L-seryl-[protein] + ATP = O-phospho-L-seryl-[protein] + ADP + H(+). The catalysed reaction is L-threonyl-[protein] + ATP = O-phospho-L-threonyl-[protein] + ADP + H(+). Functionally, serine/threonine-protein kinase which regulates mRNA translation. Negatively regulates lifespan and resistance to starvation, oxidative stress, protein aggregation and P.aeruginosa-mediated infection. May regulate these processes by preventing the activation of transcription factor hif-1. Required, probably downstream of let-363/TOR, for the establishment of the proper number of germline progenitors by promoting cell cycle progression and preventing differentiation during larval development. Regulates germ cell size. In addition required for sperm production and embryo viability. Involved in axon regeneration of PLM and ALM neurons by inhibiting growth cone formation early after axotomy and later by inhibiting axon extension. Functions in axon regeneration and lifespan probably by preventing aak-2/AMPK activation. Negatively regulates autophagy. This is Ribosomal protein S6 kinase beta from Caenorhabditis elegans.